Consider the following 95-residue polypeptide: Glutamine synthetase and cystathionine beta-lyase binding protein (95 aa).

Interacts with glutamine synthetase (TTHA1329) and cystathionine beta-lyase (TTHA1620), but proteins do not form a ternary complex.

Its function is as follows. Binds to glutamine synthetase and cystathionine beta-lyase. May be utilized for the efficient use of nitrogen in the global nitrogen regulation of T.thermophilus. This chain is Glutamine synthetase and cystathionine beta-lyase binding protein, found in Thermus thermophilus (strain ATCC 27634 / DSM 579 / HB8).